The primary structure comprises 248 residues: 1-(5-phosphoribosyl)-5-[(5-phosphoribosylamino)methylideneamino] imidazole-4-carboxamide isomerase (248 aa).

Catalysis depends on Asp-7, which acts as the Proton acceptor. Catalysis depends on Asp-131, which acts as the Proton donor.

It belongs to the HisA/HisF family.

It localises to the cytoplasm. The catalysed reaction is 1-(5-phospho-beta-D-ribosyl)-5-[(5-phospho-beta-D-ribosylamino)methylideneamino]imidazole-4-carboxamide = 5-[(5-phospho-1-deoxy-D-ribulos-1-ylimino)methylamino]-1-(5-phospho-beta-D-ribosyl)imidazole-4-carboxamide. It participates in amino-acid biosynthesis; L-histidine biosynthesis; L-histidine from 5-phospho-alpha-D-ribose 1-diphosphate: step 4/9. This chain is 1-(5-phosphoribosyl)-5-[(5-phosphoribosylamino)methylideneamino] imidazole-4-carboxamide isomerase, found in Baumannia cicadellinicola subsp. Homalodisca coagulata.